A 399-amino-acid polypeptide reads, in one-letter code: Presilphiperfolan-8-beta-ol synthase (399 aa).

A disordered region spans residues 1 to 60 (MAIPALEPQLHDADTSSNNMSSNSTDSGYDTNSTTPLEKSEKPNTQELKQQQLDPKRPPF). Over residues 15–27 (TSSNNMSSNSTDS) the composition is skewed to low complexity. Over residues 28-37 (GYDTNSTTPL) the composition is skewed to polar residues. Mg(2+)-binding residues include aspartate 141, asparagine 285, and serine 289. Positions 141–145 (DDQFD) match the DDXXD motif motif. Positions 373 and 374 each coordinate (2E,6E)-farnesyl diphosphate.

Belongs to the terpene synthase family. Mg(2+) is required as a cofactor.

It carries out the reaction (2E,6E)-farnesyl diphosphate + H2O = presilphiperfolan-8beta-ol + diphosphate. The protein operates within secondary metabolite biosynthesis. Presilphiperfolan-8-beta-ol synthase; part of the gene cluster that mediates the biosynthesis of botrydial. Botrydial is necessary for colonization of plant tissue by the T4 strain. It is a strain-dependent virulence factor since highly aggressive strains like SAS56 or B05 still retain substantial virulence when botrydial synthesis is impaired, since they produce also botcinic acid. The first step of botrydial biosynthesis is performed by the sesquiterpene synthase BOT2 which catalyzes the cyclization of farnesyl diphosphate (FPP) to presilphiperfolan-8-beta-ol (PSP). The cytochrome P450 monooxygenase BOT4 then catalyzes the hydroxylation at C-4 to give a probotryane intermediate. Acetylation of the hydroxyl at C-4 is carried out by the acetyltransferase BOT5, followed by the combined action of the P450 monooxygenases BOT3 and BOT1, to yield finally the glycol, via the regio- and stereospecific hydroxylations at C-10 and C-15 of the probotryane intermediates, respectively. The cleavage of the C10-C15 bond of probotryane skeleton is an intriguing and chemically important reaction, which could be mediated by some of the monooxygenases or by a combination of them. It is possible that either BOT3 or BOT1 would oxidize either the 10- or the 15-hydroxy group to the hydroperoxide derivative, which would then undergo heterolytic fragmentation to give the dialdehyde botrydial. Finally, the dehydrogenase BOT7 might be involved in the conversion of botrydial to dihydrobotrydial. The polypeptide is Presilphiperfolan-8-beta-ol synthase (BOT2) (Botryotinia fuckeliana (Noble rot fungus)).